The following is a 436-amino-acid chain: Xylose isomerase (436 aa).

Residues Asp306 and Asp308 each coordinate Mg(2+).

This sequence belongs to the xylose isomerase family. As to quaternary structure, homotetramer. Mg(2+) is required as a cofactor.

It localises to the cytoplasm. The catalysed reaction is alpha-D-xylose = alpha-D-xylulofuranose. This chain is Xylose isomerase, found in Rhizobium rhizogenes (strain K84 / ATCC BAA-868) (Agrobacterium radiobacter).